The chain runs to 640 residues: Telomere repeat-binding protein 4 (640 aa).

The Ubiquitin-like domain occupies V343–P422. The segment at T442–P464 is disordered. Residues S530–S589 form the HTH myb-type domain. The H-T-H motif DNA-binding region spans W558–V585.

Homomultimer. Interacts with SNL1 (via PAH2). Interacts with STO. As to expression, expressed ubiquitously. Highest expression in flowers and roots.

The protein localises to the nucleus. Binds specifically to the plant telomeric double-stranded DNA sequences 5'-TTTAGGG-3'. At least 2 repeats of telomeric sequences are required for binding. Induces DNA bending. The sequence is that of Telomere repeat-binding protein 4 (TRP4) from Arabidopsis thaliana (Mouse-ear cress).